A 427-amino-acid polypeptide reads, in one-letter code: Glutamate-1-semialdehyde 2,1-aminomutase (427 aa).

An N6-(pyridoxal phosphate)lysine modification is found at lysine 268.

The protein belongs to the class-III pyridoxal-phosphate-dependent aminotransferase family. HemL subfamily. The cofactor is pyridoxal 5'-phosphate.

The protein localises to the cytoplasm. It catalyses the reaction (S)-4-amino-5-oxopentanoate = 5-aminolevulinate. It participates in porphyrin-containing compound metabolism; protoporphyrin-IX biosynthesis; 5-aminolevulinate from L-glutamyl-tRNA(Glu): step 2/2. In Methanococcus maripaludis (strain C6 / ATCC BAA-1332), this protein is Glutamate-1-semialdehyde 2,1-aminomutase.